An 822-amino-acid chain; its full sequence is Phenylalanine--tRNA ligase beta subunit (822 aa).

One can recognise a tRNA-binding domain in the interval 39 to 150 (ADRLVGFRTA…ETAPIGESYA (112 aa)). Residues 399 to 502 (DWKRTARLRF…RLYGLDNVPA (104 aa)) form the B5 domain. 3 residues coordinate Mg(2+): D486, E489, and E490. An FDX-ACB domain is found at 728 to 821 (SPLQPVRRDF…VLKATGAVLR (94 aa)).

It belongs to the phenylalanyl-tRNA synthetase beta subunit family. Type 1 subfamily. Tetramer of two alpha and two beta subunits. Mg(2+) serves as cofactor.

It localises to the cytoplasm. It catalyses the reaction tRNA(Phe) + L-phenylalanine + ATP = L-phenylalanyl-tRNA(Phe) + AMP + diphosphate + H(+). The chain is Phenylalanine--tRNA ligase beta subunit from Gluconobacter oxydans (strain 621H) (Gluconobacter suboxydans).